We begin with the raw amino-acid sequence, 485 residues long: Glutamyl-tRNA(Gln) amidotransferase subunit A (485 aa).

Residues lysine 78 and serine 153 each act as charge relay system in the active site. Serine 177 (acyl-ester intermediate) is an active-site residue.

Belongs to the amidase family. GatA subfamily. In terms of assembly, heterotrimer of A, B and C subunits.

It carries out the reaction L-glutamyl-tRNA(Gln) + L-glutamine + ATP + H2O = L-glutaminyl-tRNA(Gln) + L-glutamate + ADP + phosphate + H(+). Functionally, allows the formation of correctly charged Gln-tRNA(Gln) through the transamidation of misacylated Glu-tRNA(Gln) in organisms which lack glutaminyl-tRNA synthetase. The reaction takes place in the presence of glutamine and ATP through an activated gamma-phospho-Glu-tRNA(Gln). The polypeptide is Glutamyl-tRNA(Gln) amidotransferase subunit A (Lawsonia intracellularis (strain PHE/MN1-00)).